The following is a 143-amino-acid chain: Small ribosomal subunit protein uS11c (143 aa).

Belongs to the universal ribosomal protein uS11 family. Part of the 30S ribosomal subunit.

Its subcellular location is the plastid. The protein resides in the chloroplast. In Brachypodium distachyon (Purple false brome), this protein is Small ribosomal subunit protein uS11c.